We begin with the raw amino-acid sequence, 417 residues long: Serine hydroxymethyltransferase (417 aa).

(6S)-5,6,7,8-tetrahydrofolate contacts are provided by residues Leu121 and 125–127 (GHL). Lys229 is subject to N6-(pyridoxal phosphate)lysine. A (6S)-5,6,7,8-tetrahydrofolate-binding site is contributed by 355–357 (SPF).

Belongs to the SHMT family. In terms of assembly, homodimer. It depends on pyridoxal 5'-phosphate as a cofactor.

Its subcellular location is the cytoplasm. The enzyme catalyses (6R)-5,10-methylene-5,6,7,8-tetrahydrofolate + glycine + H2O = (6S)-5,6,7,8-tetrahydrofolate + L-serine. The protein operates within one-carbon metabolism; tetrahydrofolate interconversion. Its pathway is amino-acid biosynthesis; glycine biosynthesis; glycine from L-serine: step 1/1. Functionally, catalyzes the reversible interconversion of serine and glycine with tetrahydrofolate (THF) serving as the one-carbon carrier. This reaction serves as the major source of one-carbon groups required for the biosynthesis of purines, thymidylate, methionine, and other important biomolecules. Also exhibits THF-independent aldolase activity toward beta-hydroxyamino acids, producing glycine and aldehydes, via a retro-aldol mechanism. The chain is Serine hydroxymethyltransferase from Shewanella denitrificans (strain OS217 / ATCC BAA-1090 / DSM 15013).